We begin with the raw amino-acid sequence, 249 residues long: DNA repair protein RecO (249 aa).

This sequence belongs to the RecO family.

Functionally, involved in DNA repair and RecF pathway recombination. This chain is DNA repair protein RecO, found in Desulforudis audaxviator (strain MP104C).